Here is a 757-residue protein sequence, read N- to C-terminus: MFVRESVMVGGRALTLETGRLAKQAHGAVLVTYGDTMVLVTAVSQDERPGLDFFPLTCEFVEKTYAAGKIPGGFFKREARQREEEILSSRLMDRPLRPLFPEGFKRDTQIIATVLSSDKQNKADVLALTGASAALHISDIPWHGPVVGVRVGRLDGEFVAYPTVADIERCDIDLVVACSRDAIVMVEGGAAEATEAEIIDALMFAHETAQPVIDLIEKMRAAVGKPKREFVAPALPDEIKRRVAQIVDEDLKAATKVTDKKARYDGYSSLKKKLTETLSAELGAEKLLPLQGLVKAEFEERKAHVVRTYVTEEGRRIDGRDGRSIRPIMCEVGLLPRVHGSALFQRGETQAIVTTTLGTSTDEQKIDGLMGETWKRFYLHYNFPPFSTGETKPLRGPGRREIGHGALAERALSRMIPAPDQFPYTIRIVSETLESNGSSSMAAVCGGCLSLMDAGVPIKSPVAGIAMGLIMEGNKYAVLSDILGDEDHLGDMDFKVCGTARGVTAIQMDIKIAGLSRQILAQALDQAREGRLHILGKMLETLPTTRPELSQYAPRITTVRVKPDQIRLIIGPGGKTIKGIVDQTGVAIDVEDDGTVNVASADSDAVKRALDIIKGLTAEPEVGATYKGTVKRITDFGAFVEILPNTDGLLHISEMAHTRVERVEDVVKEGDSLDVKVLSVDREGKIRLSRRELLPLPEGEEGDRARERMAQARDAGPPPRRDGPGGRGGDRGGDRGSRPGLDRDRGGPPRERRERRS.

Residues aspartate 487 and aspartate 493 each coordinate Mg(2+). One can recognise a KH domain in the interval proline 554 to isoleucine 613. The S1 motif domain maps to glycine 623–arginine 691. Residues proline 697 to serine 757 form a disordered region. 2 stretches are compositionally biased toward basic and acidic residues: residues glycine 702 to glutamine 711 and proline 719 to serine 757.

This sequence belongs to the polyribonucleotide nucleotidyltransferase family. Mg(2+) is required as a cofactor.

It localises to the cytoplasm. The catalysed reaction is RNA(n+1) + phosphate = RNA(n) + a ribonucleoside 5'-diphosphate. Functionally, involved in mRNA degradation. Catalyzes the phosphorolysis of single-stranded polyribonucleotides processively in the 3'- to 5'-direction. The protein is Polyribonucleotide nucleotidyltransferase of Sorangium cellulosum (strain So ce56) (Polyangium cellulosum (strain So ce56)).